We begin with the raw amino-acid sequence, 89 residues long: Putative membrane protein insertion efficiency factor (89 aa).

Belongs to the UPF0161 family.

It localises to the cell membrane. Could be involved in insertion of integral membrane proteins into the membrane. This Exiguobacterium sp. (strain ATCC BAA-1283 / AT1b) protein is Putative membrane protein insertion efficiency factor.